The primary structure comprises 430 residues: MKNVVVVGSQWGDEGKGKIVDWLSDQADVVIRFQGGHNAGHTLVIDGTTYKLRLLPSGIVRKNKISIIGNGVVVDPWALLEEIEEIKSKGVEVNVDNFIISESANLILPFHREMDEIREDAAGKGKIGTTRRGIGPAYEDKVGRRSIRVMDLRSETNLDHRLETVLLHHNAIRKGLGKKIFEKDKLKEELLKIAPEILKFSQPVWLRIDEFKKQKKRILFEGAQGILLDVDHGTYPFVTSSNTVASAAATGTGCGPNSIHYVLGITKAYTTRVGEGPFPTELTDDIGELLGSRGKEFGTVTSRKRRCGWFDGVLVRQTIKISGIDGIALTKLDVLDELDEIKMCVEYELDGKKMDYLPAAVEDQLKIKPIYKTFPGWKSSTQGIKNIENLPENAKNYIYALEDFIGTKVSSISTSPEREDTILLENPFEV.

GTP-binding positions include 12–18 (GDEGKGK) and 40–42 (GHT). Residue aspartate 13 is the Proton acceptor of the active site. Mg(2+) contacts are provided by aspartate 13 and glycine 40. IMP contacts are provided by residues 13–16 (DEGK), 38–41 (NAGH), threonine 130, arginine 144, glutamine 224, threonine 239, and arginine 303. Histidine 41 serves as the catalytic Proton donor. Position 299–305 (299–305 (TVTSRKR)) interacts with substrate. Residues arginine 305, 331–333 (KLD), and 413–415 (STS) each bind GTP.

It belongs to the adenylosuccinate synthetase family. As to quaternary structure, homodimer. It depends on Mg(2+) as a cofactor.

The protein localises to the cytoplasm. It carries out the reaction IMP + L-aspartate + GTP = N(6)-(1,2-dicarboxyethyl)-AMP + GDP + phosphate + 2 H(+). It functions in the pathway purine metabolism; AMP biosynthesis via de novo pathway; AMP from IMP: step 1/2. Plays an important role in the de novo pathway of purine nucleotide biosynthesis. Catalyzes the first committed step in the biosynthesis of AMP from IMP. In Pelagibacter ubique (strain HTCC1062), this protein is Adenylosuccinate synthetase.